A 552-amino-acid chain; its full sequence is Putative lipase ATG15 (552 aa).

Residues 1–26 (MLHITEKEQTRGLRQLEKRGKRLLPP) lie on the Cytoplasmic side of the membrane. The helical; Signal-anchor for type II membrane protein transmembrane segment at 27-49 (LIKFIWFCLISAACVAATTFYWL) threads the bilayer. Residues 50-552 (RLSPVHNIHK…WRFVSHDDKE (503 aa)) lie on the Lumenal side of the membrane. Residues Asn-63, Asn-147, Asn-239, Asn-307, and Asn-391 are each glycosylated (N-linked (GlcNAc...) asparagine). The Charge relay system role is filled by Ser-409. N-linked (GlcNAc...) asparagine glycosylation is present at Asn-526.

It belongs to the AB hydrolase superfamily. Lipase family. As to quaternary structure, binds to both phosphatidylinositol (PI) and phosphatidylinositol 3,5-bisphosphate (PIP2).

It localises to the endosome. It is found in the multivesicular body membrane. The protein localises to the prevacuolar compartment membrane. The enzyme catalyses a triacylglycerol + H2O = a diacylglycerol + a fatty acid + H(+). Its function is as follows. Lipase which is essential for lysis of subvacuolar cytoplasm to vacuole targeted bodies and intravacuolar autophagic bodies. Involved in the lysis of intravacuolar multivesicular body (MVB) vesicles. The intravacuolar membrane disintegration by ATG15 is critical to life span extension. This is Putative lipase ATG15 (ATG15) from Lodderomyces elongisporus (strain ATCC 11503 / CBS 2605 / JCM 1781 / NBRC 1676 / NRRL YB-4239) (Yeast).